The chain runs to 126 residues: Aspartate 1-decarboxylase (126 aa).

The Schiff-base intermediate with substrate; via pyruvic acid role is filled by S25. Position 25 is a pyruvic acid (Ser) (S25). T57 is a substrate binding site. Y58 (proton donor) is an active-site residue. 73–75 is a substrate binding site; the sequence is GGA.

This sequence belongs to the PanD family. Heterooctamer of four alpha and four beta subunits. The cofactor is pyruvate. Is synthesized initially as an inactive proenzyme, which is activated by self-cleavage at a specific serine bond to produce a beta-subunit with a hydroxyl group at its C-terminus and an alpha-subunit with a pyruvoyl group at its N-terminus.

The protein localises to the cytoplasm. It catalyses the reaction L-aspartate + H(+) = beta-alanine + CO2. It participates in cofactor biosynthesis; (R)-pantothenate biosynthesis; beta-alanine from L-aspartate: step 1/1. Its function is as follows. Catalyzes the pyruvoyl-dependent decarboxylation of aspartate to produce beta-alanine. This chain is Aspartate 1-decarboxylase, found in Acinetobacter baumannii (strain ACICU).